A 550-amino-acid polypeptide reads, in one-letter code: MIQRLSHPSLLSLETLFKLCKSEIHLNQIHARIIRKGLEQDQNLISIFISSSSSSSSSLSYSSSVFERVPSPGTYLWNHLIKGYSNKFLFFETVSILMRMMRTGLARPDEYTFPLVMKVCSNNGQVRVGSSVHGLVLRIGFDKDVVVGTSFVDFYGKCKDLFSARKVFGEMPERNAVSWTALVVAYVKSGELEEAKSMFDLMPERNLGSWNALVDGLVKSGDLVNAKKLFDEMPKRDIISYTSMIDGYAKGGDMVSARDLFEEARGVDVRAWSALILGYAQNGQPNEAFKVFSEMCAKNVKPDEFIMVGLMSACSQMGCFELCEKVDSYLHQRMNKFSSHYVVPALIDMNAKCGHMDRAAKLFEEMPQRDLVSYCSMMEGMAIHGCGSEAIRLFEKMVDEGIVPDEVAFTVILKVCGQSRLVEEGLRYFELMRKKYSILASPDHYSCIVNLLSRTGKLKEAYELIKSMPFEAHASAWGSLLGGCSLHGNTEIAEVVARHLFELEPQSAGSYVLLSNIYAALDRWTDVAHLRDKMNENGITKICGRSWISR.

12 PPR repeats span residues 73-107, 109-143, 144-174, 175-205, 206-240, 241-267, 268-302, 303-333, 339-369, 370-404, 405-435, and 441-475; these read GTYL…GLAR, DEYT…GFDK, DVVV…MPER, NAVS…MPER, NLGS…DIIS, YTSM…ARGV, DVRA…NVKP, DEFI…LHQR, SHYV…MPQR, DLVS…GIVP, DEVA…MRKK, and SPDH…AHAS. A type E motif region spans residues 476-550; it reads AWGSLLGGCS…KICGRSWISR (75 aa).

The protein belongs to the PPR family. PCMP-E subfamily.

This chain is Putative pentatricopeptide repeat-containing protein At5g37570 (PCMP-E37), found in Arabidopsis thaliana (Mouse-ear cress).